The sequence spans 295 residues: Iodotyrosine deiodinase (295 aa).

The helical transmembrane segment at 3 to 23 (VFSSLTPVFVAVLCVIIGFLF) threads the bilayer. Residues 29 to 81 (KESRSKQKPSDQTARPWVDEDLQDDTEISTKDNEENNEDWMDTTDEENLPHVP) form a disordered region. The span at 63 to 75 (ENNEDWMDTTDEE) shows a compositional bias: acidic residues. FMN is bound by residues 106–110 (RRSVR), S134, and 134–135 (SG). 3-iodo-L-tyrosine contacts are provided by A136, E163, Y167, and K188. FMN is bound by residues 243–245 (TTT) and R285.

The protein belongs to the nitroreductase family. Requires FMN as cofactor.

It is found in the membrane. It carries out the reaction 2 iodide + L-tyrosine + 2 NADP(+) = 3,5-diiodo-L-tyrosine + 2 NADPH + H(+). The enzyme catalyses iodide + L-tyrosine + NADP(+) = 3-iodo-L-tyrosine + NADPH. The catalysed reaction is 3-iodo-L-tyrosine + iodide + NADP(+) = 3,5-diiodo-L-tyrosine + NADPH + H(+). It catalyses the reaction L-tyrosine + chloride + NADP(+) = 3-chloro-L-tyrosine + NADPH. It carries out the reaction bromide + L-tyrosine + NADP(+) = 3-bromo-L-tyrosine + NADPH. Its function is as follows. Catalyzes the dehalogenation of halotyrosines such as 3,5-diiodo-L-tyrosine. Likely to also catalyze the dehalogenation of other halotyrosines such as 3-bromo-L-tyrosine, 3-chloro-L-tyrosine and 3-iodo-L-tyrosine. This Danio rerio (Zebrafish) protein is Iodotyrosine deiodinase (iyd).